Consider the following 628-residue polypeptide: MDYNSKTSTGGRNMAGARALWRATGMTDGDFGKPIIAIANSFTQFVPGHVHLKDLGQMVAREIEKAGGVAKEFNTIAVDDGIAMGHSGMLYSLPSRDLIADSVEYMVNAHCADALVCISNCDKITPGMLMAALRLNIPVVFISGGPMEAGKILASTVGKSHNNEDSSGGAIRKLDLVDAMMDAADDSISDEDVAAIEASACPTCGSCSGMFTANSMNCLTEALGLALPGNGSLLATHSLRRELFLEAGRTIVSLAKRRYEQDDDSVLPRSIATKAAFENAMTLDIAMGGSTNTILHLLAAANEAEVDFKMHDIDRLSRGVPCLAKVAPASQKYHMEDVHRAGGVFALLAELDRAGLLNTDLPTIHSATMKEAIDKWDIMNPDNLEARARYIAAPGGVRTTEAFSQSKEWSNLDVNRESGCIRSAQHAYSEDGGLAVLYGNIAERGCVVKTAGVDDSILVFTGRARIFESQDDAVAAVLDDQIVAGDVVIIRFEGPKGGPGMQEMLYPTTYLKSKGLGKECALLTDGRFSGGTSGLSIGHASPEAAEGGAIGLVQEGDTIHIDIPNRTINMQVSDEELAARREEMDSRGRDAWKPVSRDRHVSPALRAYAAMTTSADTGAVRDVSQVER.

Asp-80 is a binding site for Mg(2+). Residue Cys-121 participates in [2Fe-2S] cluster binding. Residues Asp-122 and Lys-123 each contribute to the Mg(2+) site. The residue at position 123 (Lys-123) is an N6-carboxylysine. Cys-207 serves as a coordination point for [2Fe-2S] cluster. Position 503 (Glu-503) interacts with Mg(2+). The active-site Proton acceptor is the Ser-529.

It belongs to the IlvD/Edd family. Homodimer. [2Fe-2S] cluster is required as a cofactor. It depends on Mg(2+) as a cofactor.

It catalyses the reaction (2R)-2,3-dihydroxy-3-methylbutanoate = 3-methyl-2-oxobutanoate + H2O. The catalysed reaction is (2R,3R)-2,3-dihydroxy-3-methylpentanoate = (S)-3-methyl-2-oxopentanoate + H2O. Its pathway is amino-acid biosynthesis; L-isoleucine biosynthesis; L-isoleucine from 2-oxobutanoate: step 3/4. It functions in the pathway amino-acid biosynthesis; L-valine biosynthesis; L-valine from pyruvate: step 3/4. Functions in the biosynthesis of branched-chain amino acids. Catalyzes the dehydration of (2R,3R)-2,3-dihydroxy-3-methylpentanoate (2,3-dihydroxy-3-methylvalerate) into 2-oxo-3-methylpentanoate (2-oxo-3-methylvalerate) and of (2R)-2,3-dihydroxy-3-methylbutanoate (2,3-dihydroxyisovalerate) into 2-oxo-3-methylbutanoate (2-oxoisovalerate), the penultimate precursor to L-isoleucine and L-valine, respectively. The protein is Dihydroxy-acid dehydratase of Psychrobacter arcticus (strain DSM 17307 / VKM B-2377 / 273-4).